We begin with the raw amino-acid sequence, 114 residues long: BolA-like protein DDB_G0274169 (114 aa).

Residues threonine 88–isoleucine 98 show a composition bias toward polar residues. Residues threonine 88–lysine 114 are disordered.

This sequence belongs to the BolA/IbaG family.

This Dictyostelium discoideum (Social amoeba) protein is BolA-like protein DDB_G0274169.